The chain runs to 187 residues: Elongation factor P (187 aa).

It belongs to the elongation factor P family.

The protein localises to the cytoplasm. The protein operates within protein biosynthesis; polypeptide chain elongation. Involved in peptide bond synthesis. Stimulates efficient translation and peptide-bond synthesis on native or reconstituted 70S ribosomes in vitro. Probably functions indirectly by altering the affinity of the ribosome for aminoacyl-tRNA, thus increasing their reactivity as acceptors for peptidyl transferase. The polypeptide is Elongation factor P (Roseobacter denitrificans (strain ATCC 33942 / OCh 114) (Erythrobacter sp. (strain OCh 114))).